The sequence spans 66 residues: U1-theraphotoxin-Cg1d 2 (66 aa).

A signal peptide spans 1 to 21; that stretch reads MKMSALFPIFGLPLLFCNSFA. Positions 22–29 are excised as a propeptide; sequence AELKATGR. Cystine bridges form between Cys31/Cys46, Cys38/Cys51, and Cys45/Cys58. At Pro63 the chain carries Proline amide.

This sequence belongs to the neurotoxin 10 (Hwtx-1) family. 46 (Jztx-7/10/12) subfamily. Expressed by the venom gland.

It localises to the secreted. Functionally, probable ion channel inhibitor. The polypeptide is U1-theraphotoxin-Cg1d 2 (Chilobrachys guangxiensis (Chinese earth tiger tarantula)).